The primary structure comprises 244 residues: NAD(P)H-quinone oxidoreductase subunit K (244 aa).

[4Fe-4S] cluster is bound by residues Cys60, Cys61, Cys125, and Cys156. The segment at 213–244 (TSANSIPSSKKEKITELPDNNEKAEIIDTLEN) is disordered. The segment covering 221–238 (SKKEKITELPDNNEKAEI) has biased composition (basic and acidic residues).

The protein belongs to the complex I 20 kDa subunit family. NDH-1 can be composed of about 15 different subunits; different subcomplexes with different compositions have been identified which probably have different functions. It depends on [4Fe-4S] cluster as a cofactor.

It localises to the cellular thylakoid membrane. It catalyses the reaction a plastoquinone + NADH + (n+1) H(+)(in) = a plastoquinol + NAD(+) + n H(+)(out). The enzyme catalyses a plastoquinone + NADPH + (n+1) H(+)(in) = a plastoquinol + NADP(+) + n H(+)(out). Functionally, NDH-1 shuttles electrons from an unknown electron donor, via FMN and iron-sulfur (Fe-S) centers, to quinones in the respiratory and/or the photosynthetic chain. The immediate electron acceptor for the enzyme in this species is believed to be plastoquinone. Couples the redox reaction to proton translocation, and thus conserves the redox energy in a proton gradient. Cyanobacterial NDH-1 also plays a role in inorganic carbon-concentration. The chain is NAD(P)H-quinone oxidoreductase subunit K from Prochlorococcus marinus (strain MIT 9301).